The sequence spans 388 residues: Succinate--CoA ligase [ADP-forming] subunit beta (388 aa).

One can recognise an ATP-grasp domain in the interval 9-245 (KELLKSYGLP…KSQENERELK (237 aa)). ATP is bound by residues K46, 53–55 (GRG), E100, Y103, and E108. 2 residues coordinate Mg(2+): N200 and D214. Residues N265 and 322–324 (GIV) contribute to the substrate site.

The protein belongs to the succinate/malate CoA ligase beta subunit family. Heterotetramer of two alpha and two beta subunits. Requires Mg(2+) as cofactor.

The catalysed reaction is succinate + ATP + CoA = succinyl-CoA + ADP + phosphate. It carries out the reaction GTP + succinate + CoA = succinyl-CoA + GDP + phosphate. Its pathway is carbohydrate metabolism; tricarboxylic acid cycle; succinate from succinyl-CoA (ligase route): step 1/1. Functionally, succinyl-CoA synthetase functions in the citric acid cycle (TCA), coupling the hydrolysis of succinyl-CoA to the synthesis of either ATP or GTP and thus represents the only step of substrate-level phosphorylation in the TCA. The beta subunit provides nucleotide specificity of the enzyme and binds the substrate succinate, while the binding sites for coenzyme A and phosphate are found in the alpha subunit. This chain is Succinate--CoA ligase [ADP-forming] subunit beta, found in Psychrobacter cryohalolentis (strain ATCC BAA-1226 / DSM 17306 / VKM B-2378 / K5).